We begin with the raw amino-acid sequence, 530 residues long: Light-independent protochlorophyllide reductase subunit B (530 aa).

Asp36 provides a ligand contact to [4Fe-4S] cluster. Asp290 acts as the Proton donor in catalysis. 425–426 (GL) contacts substrate.

The protein belongs to the ChlB/BchB/BchZ family. In terms of assembly, protochlorophyllide reductase is composed of three subunits; ChlL, ChlN and ChlB. Forms a heterotetramer of two ChlB and two ChlN subunits. [4Fe-4S] cluster is required as a cofactor.

The enzyme catalyses chlorophyllide a + oxidized 2[4Fe-4S]-[ferredoxin] + 2 ADP + 2 phosphate = protochlorophyllide a + reduced 2[4Fe-4S]-[ferredoxin] + 2 ATP + 2 H2O. It functions in the pathway porphyrin-containing compound metabolism; chlorophyll biosynthesis (light-independent). Its function is as follows. Component of the dark-operative protochlorophyllide reductase (DPOR) that uses Mg-ATP and reduced ferredoxin to reduce ring D of protochlorophyllide (Pchlide) to form chlorophyllide a (Chlide). This reaction is light-independent. The NB-protein (ChlN-ChlB) is the catalytic component of the complex. The chain is Light-independent protochlorophyllide reductase subunit B from Synechococcus sp. (strain WH7803).